Reading from the N-terminus, the 624-residue chain is Chaperone protein HtpG (624 aa).

The tract at residues Met1–Arg336 is a; substrate-binding. The b stretch occupies residues Glu337–Lys552. Positions Leu553–Ser624 are c.

Belongs to the heat shock protein 90 family. In terms of assembly, homodimer.

The protein localises to the cytoplasm. Its function is as follows. Molecular chaperone. Has ATPase activity. The protein is Chaperone protein HtpG of Klebsiella pneumoniae subsp. pneumoniae (strain ATCC 700721 / MGH 78578).